The chain runs to 35 residues: Photosystem II reaction center protein T (35 aa).

A helical transmembrane segment spans residues 3 to 23 (ALVYTFLLVSTLGIIFFAIFF).

This sequence belongs to the PsbT family. As to quaternary structure, PSII is composed of 1 copy each of membrane proteins PsbA, PsbB, PsbC, PsbD, PsbE, PsbF, PsbH, PsbI, PsbJ, PsbK, PsbL, PsbM, PsbT, PsbY, PsbZ, Psb30/Ycf12, at least 3 peripheral proteins of the oxygen-evolving complex and a large number of cofactors. It forms dimeric complexes.

The protein resides in the plastid. It is found in the chloroplast thylakoid membrane. Its function is as follows. Found at the monomer-monomer interface of the photosystem II (PS II) dimer, plays a role in assembly and dimerization of PSII. PSII is a light-driven water plastoquinone oxidoreductase, using light energy to abstract electrons from H(2)O, generating a proton gradient subsequently used for ATP formation. The protein is Photosystem II reaction center protein T of Stangeria eriopus (Natal grass cycad).